The primary structure comprises 866 residues: MSSQDPPPATSTQKKQSESLVNLLAEASRFYRKAYNELFSGLITEWEPESSTNIPDYMLFGWHLFLNLRLRSPELFKDLVSCIHGLVAVLAILLVHVPAKFRTFTIEGSSHLIKQTEKGVDLIASLCHNYHTSEECLKEMMDKSHKAIEEVFSMKALSASECKTENLDKIDTDRLMYFKGLIDMECFQSNLEKIEKLCNSNNCEAELDFKLILTNNDYIPCAENLSRDSTNLGCSKCAFETLASPRKTIKNMLTVPSSPLSPTNGCSVKIVQMTPITSAMTTAKWLREVISSLPEKPSSKLQQLMSSCDRDLTYAVTERVSIVLEAIFPTKSSADRGGSLGLNCANAFDTLWADARKMEASKLYYRVLEAICRAELQNSNVNNLTPLLSNERFHRCLIACSADVVLATHKTVIMMFPAVLESAGLTSFDLSKIIENFVRHEETLPRELKRHLNSLEEQILESMAWEKGSSLYNSLIVARPSVASEINRFGLLAESMPSLDDLVARQNIHIEGLPATPSKKRAAGRDDNADPRSPKRPCNESRSPVVEHNLQTPPPKQCHMVLTSLKAKCHPLQSTFASPTVSNPVGGNEKCADVTIQIFFSKILKLAAIRIRNLCERIQYMEQTERVYNVFKQILDQQTTLFFNRHIDQLILCCLYGVAKVCQLELSFREILNNYKKEAQCKPEVFLSIYIGSRNHNGVLISRHVDIITFYNEVFVPAAKPFLVSLISSGTRPEDKKNASGQVPGSPKLSPFPNLPDMSPKKVSASHNVYVSPLRQTKMDLLLSPSSRSFYACIGEGTHAYQSPSKDLAAINSRLNYNGRRVNSRLNFDMVSDSVVAGSLGQPNGGSTSLDPAAAFSPLSKRKPDT.

Residues 274 to 475 (TPITSAMTTA…EKGSSLYNSL (202 aa)) form a domain A region. The segment at 274-721 (TPITSAMTTA…NEVFVPAAKP (448 aa)) is pocket. Residues 476-593 (IVARPSVASE…PVGGNEKCAD (118 aa)) form a spacer region. The disordered stretch occupies residues 513-551 (LPATPSKKRAAGRDDNADPRSPKRPCNESRSPVVEHNLQ). Residues 523 to 539 (AGRDDNADPRSPKRPCN) show a composition bias toward basic and acidic residues. Residues 594 to 721 (VTIQIFFSKI…NEVFVPAAKP (128 aa)) are domain B. Disordered stretches follow at residues 731–754 (TRPE…PFPN) and 839–866 (SLGQ…KPDT). Over residues 841–850 (GQPNGGSTSL) the composition is skewed to polar residues.

Belongs to the retinoblastoma protein (RB) family. In terms of tissue distribution, ubiquitous.

The protein resides in the nucleus. Its function is as follows. Regulator of biological processes that recruits a histone deacetylase to control gene transcription. May play a role in the entry into mitosis, negatively regulating the cell proliferation. Formation of stable complexes with geminiviridae replication-associated proteins may create a cellular environment which favors viral DNA replication. This chain is Retinoblastoma-related protein 2 (RBR2), found in Zea mays (Maize).